We begin with the raw amino-acid sequence, 166 residues long: Lipoprotein signal peptidase (166 aa).

3 consecutive transmembrane segments (helical) span residues 12-32, 70-90, and 102-122; these read WLWVVVAVLIIDLGSKFLILQ, WFFSGIAIGICVVLTVLMYRS, and ALIIGGALGNLFDRLWHGFVV. Active-site residues include Asp-123 and Asp-141. The helical transmembrane segment at 137–157 threads the bilayer; the sequence is FNLADSAICIGAALIVLEGFL.

Belongs to the peptidase A8 family.

The protein resides in the cell inner membrane. The catalysed reaction is Release of signal peptides from bacterial membrane prolipoproteins. Hydrolyzes -Xaa-Yaa-Zaa-|-(S,diacylglyceryl)Cys-, in which Xaa is hydrophobic (preferably Leu), and Yaa (Ala or Ser) and Zaa (Gly or Ala) have small, neutral side chains.. The protein operates within protein modification; lipoprotein biosynthesis (signal peptide cleavage). This protein specifically catalyzes the removal of signal peptides from prolipoproteins. The chain is Lipoprotein signal peptidase from Klebsiella pneumoniae (strain 342).